Reading from the N-terminus, the 142-residue chain is Large ribosomal subunit protein uL16 (142 aa).

The protein belongs to the universal ribosomal protein uL16 family. Part of the 50S ribosomal subunit.

Binds 23S rRNA and is also seen to make contacts with the A and possibly P site tRNAs. This Thermosipho africanus (strain TCF52B) protein is Large ribosomal subunit protein uL16.